A 142-amino-acid polypeptide reads, in one-letter code: Salivary protein 15b (142 aa).

An N-terminal signal peptide occupies residues 1–20; the sequence is MKYLGLALISAVFLIGTCQA. Intrachain disulfides connect Cys-27–Cys-44, Cys-40–Cys-108, and Cys-91–Cys-117.

This sequence belongs to the PBP/GOBP family. As to expression, female salivary gland.

The protein localises to the secreted. Functionally, inhibits contact coagulation pathway activation in the host by sequestering anionic polymers, such as dextran sulfate and heparin, and thus blocking interaction of protein components of the pathway with negatively charged surfaces. Inhibits dextran sulfate-mediated autoactivation of host coagulation factor XII (F12). Inhibits dextran sulfate-mediated activation of host factor XI (F11) by activated F12. Inhibits polyphosphate-induced plasma extravasation at the injection site in mouse model, probably via inhibition of bradykinin generation in host skin. In Phlebotomus duboscqi (Sandfly), this protein is Salivary protein 15b.